A 261-amino-acid chain; its full sequence is Basic leucine zipper 19 (261 aa).

2 disordered regions span residues 1–22 and 74–100; these read MEDGELDFSNQEVFSSSEMGEL and ESDEKVSTDDTAESCGKKGEKRPLGNR. Residues 8 to 18 show a composition bias toward polar residues; the sequence is FSNQEVFSSSE. Residues 88-100 are compositionally biased toward basic and acidic residues; it reads CGKKGEKRPLGNR. A bZIP domain is found at 89-155; it reads GKKGEKRPLG…SRLKCLLVDL (67 aa). The segment at 90-113 is basic motif; the sequence is KKGEKRPLGNREAVRKYREKKKAK. The tract at residues 117 to 131 is leucine-zipper; that stretch reads LEDEVARLRAVNQQL. Low complexity predominate over residues 237-248; sequence NGSFSNVNTSVS. Positions 237-261 are disordered; that stretch reads NGSFSNVNTSVSNKRKGGHRASRAV. Residues 249 to 261 show a composition bias toward basic residues; the sequence is NKRKGGHRASRAV.

The protein resides in the nucleus. Its function is as follows. Transcription factor involved in the response to zinc ion deficiency. Binds to the consensus sequence 5'-[AG]TGTCGACA[CT]-3' also called zinc deficiency response element (ZDRE). The ZDRE sequence is conserved in the plant kingdom and present in the promoters of genes that constitute the primary response to zinc deficiency, comprising additional ZIP metal transporter genes. Required for zinc accumulation in roots. Mediates the expression of the zinc transporters ZIP3, ZIP4, ZIP5 and ZIP9 during growth in zinc-deficient conditions. ZIP9 transporter is involved in zinc uptake in roots. In Arabidopsis thaliana (Mouse-ear cress), this protein is Basic leucine zipper 19.